Reading from the N-terminus, the 633-residue chain is Probable methyltransferase PMT17 (633 aa).

Over Met1–Lys18 the chain is Cytoplasmic. Residues Leu19–Gln39 traverse the membrane as a helical; Signal-anchor for type II membrane protein segment. Topologically, residues Ala40–Asn633 are lumenal. Residues Leu50–Ala71 form a disordered region. Residues Ser59–Ser70 show a composition bias toward low complexity. The N-linked (GlcNAc...) asparagine glycan is linked to Asn87.

It belongs to the methyltransferase superfamily.

The protein resides in the endoplasmic reticulum membrane. This chain is Probable methyltransferase PMT17, found in Arabidopsis thaliana (Mouse-ear cress).